Consider the following 391-residue polypeptide: Elongation factor Tu (391 aa).

The 192-residue stretch at 10–201 (KPHVNIGTIG…AVDEYIPTPA (192 aa)) folds into the tr-type G domain. Positions 19–26 (GHVDHGKT) are G1. 19-26 (GHVDHGKT) provides a ligand contact to GTP. Residue Thr26 coordinates Mg(2+). A G2 region spans residues 55–59 (GITIS). A G3 region spans residues 76-79 (DCPG). GTP is bound by residues 76–80 (DCPGH) and 131–134 (NKVD). The segment at 131–134 (NKVD) is G4. Residues 169–171 (SAL) form a G5 region.

It belongs to the TRAFAC class translation factor GTPase superfamily. Classic translation factor GTPase family. EF-Tu/EF-1A subfamily. Monomer.

The protein localises to the cytoplasm. It carries out the reaction GTP + H2O = GDP + phosphate + H(+). GTP hydrolase that promotes the GTP-dependent binding of aminoacyl-tRNA to the A-site of ribosomes during protein biosynthesis. The sequence is that of Elongation factor Tu from Cereibacter sphaeroides (strain ATCC 17029 / ATH 2.4.9) (Rhodobacter sphaeroides).